Consider the following 343-residue polypeptide: Holliday junction branch migration complex subunit RuvB (343 aa).

The segment at 4–193 (TDNLTAAQPQ…FGIVSRLEFY (190 aa)) is large ATPase domain (RuvB-L). Residues L32, R33, G74, K77, T78, T79, 140–142 (EDY), R183, Y193, and R230 contribute to the ATP site. Mg(2+) is bound at residue T78. The tract at residues 194–264 (ENRDLTTIVS…VADAALSMLD (71 aa)) is small ATPAse domain (RuvB-S). A head domain (RuvB-H) region spans residues 267–343 (AQGLDVMDRK…YLHFGLPVEK (77 aa)). Residues R322 and R327 each coordinate DNA.

This sequence belongs to the RuvB family. As to quaternary structure, homohexamer. Forms an RuvA(8)-RuvB(12)-Holliday junction (HJ) complex. HJ DNA is sandwiched between 2 RuvA tetramers; dsDNA enters through RuvA and exits via RuvB. An RuvB hexamer assembles on each DNA strand where it exits the tetramer. Each RuvB hexamer is contacted by two RuvA subunits (via domain III) on 2 adjacent RuvB subunits; this complex drives branch migration. In the full resolvosome a probable DNA-RuvA(4)-RuvB(12)-RuvC(2) complex forms which resolves the HJ.

It is found in the cytoplasm. The catalysed reaction is ATP + H2O = ADP + phosphate + H(+). Functionally, the RuvA-RuvB-RuvC complex processes Holliday junction (HJ) DNA during genetic recombination and DNA repair, while the RuvA-RuvB complex plays an important role in the rescue of blocked DNA replication forks via replication fork reversal (RFR). RuvA specifically binds to HJ cruciform DNA, conferring on it an open structure. The RuvB hexamer acts as an ATP-dependent pump, pulling dsDNA into and through the RuvAB complex. RuvB forms 2 homohexamers on either side of HJ DNA bound by 1 or 2 RuvA tetramers; 4 subunits per hexamer contact DNA at a time. Coordinated motions by a converter formed by DNA-disengaged RuvB subunits stimulates ATP hydrolysis and nucleotide exchange. Immobilization of the converter enables RuvB to convert the ATP-contained energy into a lever motion, pulling 2 nucleotides of DNA out of the RuvA tetramer per ATP hydrolyzed, thus driving DNA branch migration. The RuvB motors rotate together with the DNA substrate, which together with the progressing nucleotide cycle form the mechanistic basis for DNA recombination by continuous HJ branch migration. Branch migration allows RuvC to scan DNA until it finds its consensus sequence, where it cleaves and resolves cruciform DNA. The protein is Holliday junction branch migration complex subunit RuvB of Neisseria gonorrhoeae (strain NCCP11945).